Consider the following 416-residue polypeptide: Formyl-CoA:oxalate CoA-transferase (416 aa).

Residues 17–18 (QS), arginine 38, 72–75 (LNTK), 96–98 (NFH), histidine 104, and 137–140 (KAYE) contribute to the CoA site. The active-site Nucleophile is the aspartate 169. 248–250 (GGQ) serves as a coordination point for substrate. 273–275 (QEQ) is a binding site for CoA.

This sequence belongs to the CoA-transferase III family. Frc subfamily. Homodimer.

The enzyme catalyses formyl-CoA + oxalate = oxalyl-CoA + formate. It functions in the pathway metabolic intermediate degradation; oxalate degradation; CO(2) and formate from oxalate: step 1/2. Its function is as follows. Involved in the catabolism of oxalate and in the adapatation to low pH via the induction of the oxalate-dependent acid tolerance response (ATR). Catalyzes the transfer of the CoA moiety from formyl-CoA to oxalate. The sequence is that of Formyl-CoA:oxalate CoA-transferase from Escherichia coli O17:K52:H18 (strain UMN026 / ExPEC).